The primary structure comprises 89 residues: Cornifin (89 aa).

Residues Met-1–Pro-29 are disordered. Ser-2 carries the post-translational modification N-acetylserine. 8 repeat units span residues Ser-3 to Pro-14, Gln-18 to Pro-29, Glu-31 to Lys-38, Glu-39 to Pro-46, Glu-47 to Pro-54, Glu-55 to Pro-62, Glu-63 to Pro-70, and Glu-71 to Thr-78. The interval Ser-3–Pro-29 is 2 X 12 AA approximate repeats. The tract at residues Glu-31–Thr-78 is 6 X 8 AA approximate tandem repeats. The interval Lys-68–Lys-89 is disordered. The segment covering Ser-75 to Lys-89 has biased composition (polar residues).

Belongs to the cornifin (SPRR) family.

The protein localises to the cytoplasm. Cross-linked envelope protein of keratinocytes. It is a keratinocyte protein that first appears in the cell cytosol, but ultimately becomes cross-linked to membrane proteins by transglutaminase. All that results in the formation of an insoluble envelope beneath the plasma membrane. The sequence is that of Cornifin (SPRR1) from Macaca mulatta (Rhesus macaque).